We begin with the raw amino-acid sequence, 73 residues long: Bacterioferritin-associated ferredoxin (73 aa).

2 residues coordinate [2Fe-2S] cluster: Cys4 and Cys6. Arg26 and Arg29 together coordinate phosphate. [2Fe-2S] cluster-binding residues include Cys38 and Cys41. Lys46 serves as a coordination point for phosphate.

This sequence belongs to the Bfd family. Monomer. Interacts with BfrB; up to 12 Bfd proteins can bind to the BfrB bacterioferritin complex (BFR). One Bfd protein binds to a BfrB dimer in the BFR, with the [2Fe-2S] cluster positioned about 22 Angstroms above the heme of BfrB. Does not interact with FtnA. [2Fe-2S] cluster serves as cofactor. It depends on phosphate as a cofactor.

In terms of biological role, required for mobilization of iron from the bacterioferritin (BFR) complex, composed of BfrB and FtnA in varying proportions; mobilization requires the [2Fe-2S] cluster of this protein. Reduction of the BfrB heme group occurs in the presence of Bfd, strongly suggesting that the BfrB-Bfd complex allows heme to mediate electron transfer from FPR to the Fe(3+) iron core in the BFR prior to its release as Fe(2+). The polypeptide is Bacterioferritin-associated ferredoxin (Pseudomonas aeruginosa (strain ATCC 15692 / DSM 22644 / CIP 104116 / JCM 14847 / LMG 12228 / 1C / PRS 101 / PAO1)).